The chain runs to 256 residues: 5-oxoprolinase subunit A (256 aa).

It belongs to the LamB/PxpA family. Forms a complex composed of PxpA, PxpB and PxpC.

The catalysed reaction is 5-oxo-L-proline + ATP + 2 H2O = L-glutamate + ADP + phosphate + H(+). Catalyzes the cleavage of 5-oxoproline to form L-glutamate coupled to the hydrolysis of ATP to ADP and inorganic phosphate. In Geobacillus kaustophilus (strain HTA426), this protein is 5-oxoprolinase subunit A.